The sequence spans 365 residues: Homeobox protein knotted-1-like 7 (365 aa).

Over residues 1-11 (MEELEGHRGEG) the composition is skewed to basic and acidic residues. The disordered stretch occupies residues 1–20 (MEELEGHRGEGRLPPPPPLL). Positions 227-247 (ALKRHLLRKYSGYLGGLRKEL) constitute an ELK domain. Residues 248-311 (SKKRKKGKLP…NQRKRHWKPT (64 aa)) constitute a DNA-binding region (homeobox; TALE-type).

It belongs to the TALE/KNOX homeobox family.

It is found in the nucleus. In terms of biological role, probable transcription factor that may be involved in shoot formation during embryogenesis. The chain is Homeobox protein knotted-1-like 7 (OSH3) from Oryza sativa subsp. japonica (Rice).